The chain runs to 362 residues: tRNA/tmRNA (uracil-C(5))-methyltransferase (362 aa).

S-adenosyl-L-methionine-binding residues include Gln-182, Tyr-210, Asn-215, Glu-231, and Asp-293. The Nucleophile role is filled by Cys-318. The active-site Proton acceptor is the Glu-352.

Belongs to the class I-like SAM-binding methyltransferase superfamily. RNA M5U methyltransferase family. TrmA subfamily.

It carries out the reaction uridine(54) in tRNA + S-adenosyl-L-methionine = 5-methyluridine(54) in tRNA + S-adenosyl-L-homocysteine + H(+). It catalyses the reaction uridine(341) in tmRNA + S-adenosyl-L-methionine = 5-methyluridine(341) in tmRNA + S-adenosyl-L-homocysteine + H(+). Its function is as follows. Dual-specificity methyltransferase that catalyzes the formation of 5-methyluridine at position 54 (m5U54) in all tRNAs, and that of position 341 (m5U341) in tmRNA (transfer-mRNA). The chain is tRNA/tmRNA (uracil-C(5))-methyltransferase from Neisseria gonorrhoeae (strain ATCC 700825 / FA 1090).